The primary structure comprises 256 residues: Alcohol dehydrogenase (256 aa).

Position 12–35 (12–35) interacts with NAD(+); it reads FVAGLGGIGLDTSKELVKRDLKNL. Substrate is bound at residue Ser-140. Tyr-153 functions as the Proton acceptor in the catalytic mechanism.

The protein belongs to the short-chain dehydrogenases/reductases (SDR) family. As to quaternary structure, homodimer.

The catalysed reaction is a primary alcohol + NAD(+) = an aldehyde + NADH + H(+). It catalyses the reaction a secondary alcohol + NAD(+) = a ketone + NADH + H(+). The chain is Alcohol dehydrogenase (Adh) from Drosophila yakuba (Fruit fly).